We begin with the raw amino-acid sequence, 95 residues long: MSVDISTVKRVAHLARIAVSEEDAERMTGELNAILGFVEQLNEVDVEGIEPMTSVTPMKMRMREDKVTDGGIAAAVVANAPVTEDNFFVVPKVVE.

Belongs to the GatC family. In terms of assembly, heterotrimer of A, B and C subunits.

It catalyses the reaction L-glutamyl-tRNA(Gln) + L-glutamine + ATP + H2O = L-glutaminyl-tRNA(Gln) + L-glutamate + ADP + phosphate + H(+). The catalysed reaction is L-aspartyl-tRNA(Asn) + L-glutamine + ATP + H2O = L-asparaginyl-tRNA(Asn) + L-glutamate + ADP + phosphate + 2 H(+). Functionally, allows the formation of correctly charged Asn-tRNA(Asn) or Gln-tRNA(Gln) through the transamidation of misacylated Asp-tRNA(Asn) or Glu-tRNA(Gln) in organisms which lack either or both of asparaginyl-tRNA or glutaminyl-tRNA synthetases. The reaction takes place in the presence of glutamine and ATP through an activated phospho-Asp-tRNA(Asn) or phospho-Glu-tRNA(Gln). The sequence is that of Aspartyl/glutamyl-tRNA(Asn/Gln) amidotransferase subunit C from Brucella melitensis biotype 2 (strain ATCC 23457).